The primary structure comprises 1000 residues: Putative methyl-accepting chemotaxis protein sll0041 (1000 aa).

The segment at 1–59 (MTQNPSSDRRPDTAQSVANGETLDGALFTGLTDTAAAQDESSETSASFATIDGEDKSEV) is disordered. 2 GAF domains span residues 342 to 478 (EIQG…QTTL) and 509 to 650 (NSEQ…GLAL). One can recognise an HAMP domain in the interval 671 to 722 (EKMQKRALELLMEVDPVSRGDLTIRAHVTEDEIGTIADSYNATIESLRRIVT). The Methyl-accepting transducer domain occupies 727–963 (AASQFTETTD…SVTQTMALVA (237 aa)).

It belongs to the methyl-accepting chemotaxis (MCP) protein family.

The polypeptide is Putative methyl-accepting chemotaxis protein sll0041 (Synechocystis sp. (strain ATCC 27184 / PCC 6803 / Kazusa)).